A 524-amino-acid polypeptide reads, in one-letter code: RNA-splicing ligase RtcB homolog 2 (524 aa).

Residues aspartate 141, cysteine 144, histidine 249, histidine 281, and histidine 372 each coordinate Mn(2+). 248–252 (NHYLE) is a binding site for GMP. GMP contacts are provided by residues 372 to 373 (HN), 421 to 424 (GGSM), serine 428, 447 to 450 (HGAG), and lysine 523. Catalysis depends on histidine 447, which acts as the GMP-histidine intermediate.

This sequence belongs to the RtcB family. Catalytic component of the tRNA-splicing ligase complex. The cofactor is Mn(2+).

It carries out the reaction a 3'-end 3'-phospho-ribonucleotide-RNA + a 5'-end dephospho-ribonucleoside-RNA + GTP = a ribonucleotidyl-ribonucleotide-RNA + GMP + diphosphate. The catalysed reaction is a 3'-end 2',3'-cyclophospho-ribonucleotide-RNA + a 5'-end dephospho-ribonucleoside-RNA + GTP + H2O = a ribonucleotidyl-ribonucleotide-RNA + GMP + diphosphate + H(+). Its function is as follows. Catalytic subunit of the tRNA-splicing ligase complex that acts by directly joining spliced tRNA halves to mature-sized tRNAs by incorporating the precursor-derived splice junction phosphate into the mature tRNA as a canonical 3',5'-phosphodiester. May act as an RNA ligase with broad substrate specificity, and may function toward other RNAs. This is RNA-splicing ligase RtcB homolog 2 from Entamoeba dispar (strain ATCC PRA-260 / SAW760).